A 149-amino-acid polypeptide reads, in one-letter code: Ricin B-like lectin (149 aa).

Ser-2 is modified (N-acetylserine). Residues Asp-21, Gly-24, Asn-39, and Asn-47 each contribute to the a carbohydrate site. The tract at residues 110-112 (PNL) is involved in dimerization.

As to quaternary structure, homodimer. In terms of processing, the N-terminus is blocked.

Its function is as follows. Lectin specific for terminal, non-reducing N-acetylgalactosamine (Gal-NAc)-containing carbohydrates including N,N'-diacetyllactosediamine/LDN (GalNAcbeta1-4GlcNAc, LacdiNAc). Specific also for carbohydrates containing N-acetylglucosamine (-GlcNAc) or N-acetyllactosamine (-Galbeta1-4GlcNAc) at the reducing end. Agglutinates human blood group A, AB, B and O erythrocytes with a strong preference for group A. Agglutinates bovine erythrocytes with a very low specificity. Binds carbohydrates bivalently, which is required for its biological activity. Exhibits insecticidal activity against the fruit fly D.melanogaster, mosquito A.aegypti, and amoebozoa A.castellanii. Has anti-nutritional activity against Colorado potato beetle L.decemlineata, and against worm C.elegans. Has antiproliferative activity against human leukemic T-cells. Has an immunostimulatory effect on human antigen-presenting dendritic cells, which are subsequently able to induce efficient T-cell immune responses. This chain is Ricin B-like lectin, found in Clitocybe nebularis (Clouded agaric).